A 376-amino-acid polypeptide reads, in one-letter code: GTPase Obg (376 aa).

Positions Ala-2 to Val-161 constitute an Obg domain. The region spanning Ala-162–Asp-328 is the OBG-type G domain. GTP-binding positions include Gly-168–Ser-175, Phe-193–Ile-197, Asp-215–Gly-218, Thr-282–Asp-285, and Ser-309–His-311. Residues Ser-175 and Thr-195 each coordinate Mg(2+).

The protein belongs to the TRAFAC class OBG-HflX-like GTPase superfamily. OBG GTPase family. As to quaternary structure, monomer. Mg(2+) is required as a cofactor.

It localises to the cytoplasm. Functionally, an essential GTPase which binds GTP, GDP and possibly (p)ppGpp with moderate affinity, with high nucleotide exchange rates and a fairly low GTP hydrolysis rate. Plays a role in control of the cell cycle, stress response, ribosome biogenesis and in those bacteria that undergo differentiation, in morphogenesis control. This is GTPase Obg from Treponema pallidum (strain Nichols).